The sequence spans 115 residues: Probable prefoldin subunit 1 (115 aa).

The protein belongs to the prefoldin subunit beta family. As to quaternary structure, heterohexamer of two PFD-alpha type and four PFD-beta type subunits.

Binds specifically to cytosolic chaperonin (c-CPN) and transfers target proteins to it. Binds to nascent polypeptide chain and promotes folding in an environment in which there are many competing pathways for nonnative proteins. The protein is Probable prefoldin subunit 1 (pfdn1) of Dictyostelium discoideum (Social amoeba).